Here is a 465-residue protein sequence, read N- to C-terminus: Biotin biosynthesis bifunctional protein BioCD (465 aa).

The interval 1-254 (MTPFLPDRSI…AYGQWRKPRG (254 aa)) is malonyl-ACP O-methyltransferase. ATP is bound by residues D234 and 263-268 (GVGKTL). The interval 255–465 (VFVTGTDTGV…DSLLSSNASR (211 aa)) is DTB synthetase. Residue T267 participates in Mg(2+) binding. K283 is a catalytic residue. A substrate-binding site is contributed by T287. ATP contacts are provided by residues D295, 351–354 (EGAG), and 435–437 (PQL). Mg(2+)-binding residues include D295 and E351.

It in the N-terminal section; belongs to the methyltransferase superfamily. In the C-terminal section; belongs to the dethiobiotin synthetase family. Mg(2+) serves as cofactor.

It localises to the cytoplasm. The enzyme catalyses (7R,8S)-7,8-diammoniononanoate + CO2 + ATP = (4R,5S)-dethiobiotin + ADP + phosphate + 3 H(+). It carries out the reaction malonyl-[ACP] + S-adenosyl-L-methionine = malonyl-[ACP] methyl ester + S-adenosyl-L-homocysteine. The protein operates within cofactor biosynthesis; biotin biosynthesis; biotin from 7,8-diaminononanoate: step 1/2. Its pathway is cofactor biosynthesis; biotin biosynthesis. In terms of biological role, converts the free carboxyl group of a malonyl-thioester to its methyl ester by transfer of a methyl group from S-adenosyl-L-methionine (SAM). It allows synthesis of pimeloyl-ACP via the fatty acid synthetic pathway. Catalyzes a mechanistically unusual reaction, the ATP-dependent insertion of CO2 between the N7 and N8 nitrogen atoms of 7,8-diaminopelargonic acid (DAPA, also called 7,8-diammoniononanoate) to form a ureido ring. This Bordetella avium (strain 197N) protein is Biotin biosynthesis bifunctional protein BioCD.